The following is a 541-amino-acid chain: Chaperonin GroEL (541 aa).

ATP contacts are provided by residues T29–P32, D86–T90, G413, D478–L480, and D494.

The protein belongs to the chaperonin (HSP60) family. As to quaternary structure, forms a cylinder of 14 subunits composed of two heptameric rings stacked back-to-back. Interacts with the co-chaperonin GroES.

It is found in the cytoplasm. The enzyme catalyses ATP + H2O + a folded polypeptide = ADP + phosphate + an unfolded polypeptide.. Its function is as follows. Together with its co-chaperonin GroES, plays an essential role in assisting protein folding. The GroEL-GroES system forms a nano-cage that allows encapsulation of the non-native substrate proteins and provides a physical environment optimized to promote and accelerate protein folding. The polypeptide is Chaperonin GroEL (Alkaliphilus oremlandii (strain OhILAs) (Clostridium oremlandii (strain OhILAs))).